A 129-amino-acid chain; its full sequence is Small ribosomal subunit protein uS11 (129 aa).

This sequence belongs to the universal ribosomal protein uS11 family. In terms of assembly, part of the 30S ribosomal subunit. Interacts with proteins S7 and S18. Binds to IF-3.

Its function is as follows. Located on the platform of the 30S subunit, it bridges several disparate RNA helices of the 16S rRNA. Forms part of the Shine-Dalgarno cleft in the 70S ribosome. The polypeptide is Small ribosomal subunit protein uS11 (Lawsonia intracellularis (strain PHE/MN1-00)).